The primary structure comprises 294 residues: MTDLVPFSGRTLSEAASELGEGPTFDPGTGTAWWFNITGRELHELHLESGRKAIHPLPFLGSVLAVIDPLRQLIASDQGLFVRDTESSKLGHFATLEEKPGNRSNDGRIHPCGALWIGTMGRSAEKHAGAIYHVAGSRVTKLYSNITIPNAICFSPDGATAYFTDTDVNQLMRVDIDPATALPTGDPVLLSDESTSPGGVDGAVCDADGLIWNARWGASAVEVYKPDGQKVARYAVPATQPSCPAFVGAKAERLLVTSAWQGMDDAARAADPHAGKTFELGIEVKGRFEPAFRL.

The a divalent metal cation site is built by E21, N150, and D201. The active-site Proton donor/acceptor is the D201.

The protein belongs to the SMP-30/CGR1 family. It depends on a divalent metal cation as a cofactor.

Its function is as follows. Involved in the degradation of galactose via the DeLey-Doudoroff pathway. The polypeptide is Putative sugar lactone lactonase (Rhizobium meliloti (strain 1021) (Ensifer meliloti)).